Reading from the N-terminus, the 934-residue chain is MSDPHSFLGCVRRGLRFDMFKDVARQYPVIFCIFTVMISSTIILNQYLHILMVFWSFLAGVITFYCSLSPEYLLPNILISIKTKRKPQEQHELFPLGHSCAVCGKNQCKRHRPTLLLENYQPWLNLKVPSKVDASISEVLELVLENFVYPWYRDITDDEACVDELRQTIRFFAAVLAHRAQRVDVPSVVMDKMMKAAMKHIEIIAKAQQKVRNTDGLEQAALAEYGADLHVALRSRKDELLYLRKLTELLFPYVMPPKATDCRSLALLIREVMTGSVFLPIMDFVADPDTVNHMVLIFIDDSPPEPVTDPPSTLVPFLERFADPRTKKSSVLKLDLKEIREQQDLLFRFMSFLKEEGAVHVLQFCLTVEEFNDRILCPDLSDDEKQRLHEEVKKIYETYCLEESIDKISFDPFIIEEIHSIAEGPYTGVVKLQTMRCLFEAYEHVLCLLEKVFTPMFCHSDEYFRHLLCGAESPARNSKLNRNTSKRGESFGISRIGSKIKGVFKSSTMEGAMLPQYAMIEGEDDTVEEAVMVFEDDSPGPMDAVGTPGTLRNLSAWTISIPYVDFYDDEVKKERIPVFCIDVERNDRKNVGHETESWSVYRKYVEFYVLESKLTEFHGPFQDAQLPSKRIIGPKNYEFLSSKRGEFEEYLQKLLHHPELSNSQLLADFLSPFSMESQFRDKMLPDVNLGKIFKSVPGKLIKEKGQNLEPFIQSFFSSCESPKPKPSRPELTILSPTAENNKKLFNELYRNNANLPEGLEKKHNQNYFMELMEVDGAYDYMMYIGRVVFRMPDWLHHLLSGVRILLKRTLEAYVGHYFQYKLEQIMEEHRLVSLVTLLRDAVFCESTEERSPEDKQRRAKQTFEEMMNYLPDIVGKCIGEEAKYDGVKMLFNTIQQPLLNKQMTYVLLDIAIQELFPELSKNQKQGLSVSTRWM.

Helical transmembrane passes span 27-47 (YPVI…LNQY) and 48-68 (LHIL…YCSL). In terms of domain architecture, PXA spans 129–303 (PSKVDASISE…MVLIFIDDSP (175 aa)). The RGS domain occupies 335–467 (DLKEIREQQD…CHSDEYFRHL (133 aa)). The PX domain maps to 557-677 (WTISIPYVDF…DFLSPFSMES (121 aa)).

The protein belongs to the sorting nexin family.

The protein localises to the lysosome membrane. It is found in the late endosome membrane. It localises to the cell projection. Its subcellular location is the dendrite. Plays a role in maintaining normal neuronal excitability and synaptic transmission. May be involved in several stages of intracellular trafficking. Required for autophagosome clearance, possibly by mediating the fusion of lysosomes with autophagosomes. Binds phosphatidylinositol 3,5-bisphosphate (PtdIns(3,5)P2), a key component of late endosomes/lysosomes. Does not bind phosphatidylinositol 3-phosphate (PtdIns(3P)). The protein is Sorting nexin-14 of Danio rerio (Zebrafish).